A 467-amino-acid polypeptide reads, in one-letter code: Glutamate--tRNA ligase (467 aa).

A 'HIGH' region motif is present at residues 9 to 19 (PSPTGFLHIGG). The 'KMSKS' region signature appears at 250 to 254 (KLSKR). Lys253 is an ATP binding site.

Belongs to the class-I aminoacyl-tRNA synthetase family. Glutamate--tRNA ligase type 1 subfamily. In terms of assembly, monomer.

Its subcellular location is the cytoplasm. The catalysed reaction is tRNA(Glu) + L-glutamate + ATP = L-glutamyl-tRNA(Glu) + AMP + diphosphate. Catalyzes the attachment of glutamate to tRNA(Glu) in a two-step reaction: glutamate is first activated by ATP to form Glu-AMP and then transferred to the acceptor end of tRNA(Glu). This is Glutamate--tRNA ligase from Mesomycoplasma hyopneumoniae (strain J / ATCC 25934 / NCTC 10110) (Mycoplasma hyopneumoniae).